We begin with the raw amino-acid sequence, 197 residues long: Guanylate kinase (197 aa).

One can recognise a Guanylate kinase-like domain in the interval 7–185 (GLIIILSSPS…TLKKIHEIIV (179 aa)). Residue 14–21 (SPSGTGKS) coordinates ATP.

Belongs to the guanylate kinase family.

It is found in the cytoplasm. It carries out the reaction GMP + ATP = GDP + ADP. Essential for recycling GMP and indirectly, cGMP. This chain is Guanylate kinase (gmk), found in Rickettsia prowazekii (strain Madrid E).